A 297-amino-acid polypeptide reads, in one-letter code: Homoserine kinase (297 aa).

An ATP-binding site is contributed by 85–95; sequence PPTRGMGSSSA.

It belongs to the GHMP kinase family. Homoserine kinase subfamily.

The protein resides in the cytoplasm. The catalysed reaction is L-homoserine + ATP = O-phospho-L-homoserine + ADP + H(+). Its pathway is amino-acid biosynthesis; L-threonine biosynthesis; L-threonine from L-aspartate: step 4/5. Functionally, catalyzes the ATP-dependent phosphorylation of L-homoserine to L-homoserine phosphate. The protein is Homoserine kinase of Desulfitobacterium hafniense (strain DSM 10664 / DCB-2).